We begin with the raw amino-acid sequence, 554 residues long: Calcium-dependent protein kinase 3 (554 aa).

A disordered region spans residues 30-55 (KKKSSNKSIKSQHKFEGSKIANKNNE). The Protein kinase domain occupies 110–365 (NLSEEPLGKG…ASEALKHPWF (256 aa)). ATP contacts are provided by residues 116–124 (LGKGTYGCV) and lysine 139. Catalysis depends on aspartate 230, which acts as the Proton acceptor. Residues 385-393 (NFKNYALLL) carry the J domain autoinhibitory motif motif. The interval 385-420 (NFKNYALLLKLQKLAMTIIAQQSNDYDLQQLKTVFL) is j domain. Positions 394–403 (KLQKLAMTII) match the J domain EF-hand interaction motif motif. EF-hand domains follow at residues 410–445 (YDLQQLKTVFLYLDEDGKGNITKNQLKKGLENSGLK), 448–479 (QNFDVLLDQIDSDGSGRIDYTEFLAAALDRKH), 480–515 (LSKKLIYCAFRVFDVDNDGEITTAELAHILYNGNKK), and 521–554 (KDVNQVKKMIQEVDKNNDGKIDFYEFCEMMKLKY). 15 residues coordinate Ca(2+): aspartate 458, aspartate 460, serine 462, arginine 464, glutamate 469, aspartate 493, aspartate 495, aspartate 497, glutamate 499, glutamate 504, aspartate 534, asparagine 536, aspartate 538, lysine 540, and glutamate 545.

It belongs to the protein kinase superfamily. Ser/Thr protein kinase family. CDPK subfamily. Mg(2+) is required as a cofactor.

It is found in the cytoplasm. It catalyses the reaction L-seryl-[protein] + ATP = O-phospho-L-seryl-[protein] + ADP + H(+). The enzyme catalyses L-threonyl-[protein] + ATP = O-phospho-L-threonyl-[protein] + ADP + H(+). Activated by calcium. Upon calcium binding to the EF-hand domain 2, the C-terminus of the junction domain (J domain) undergoes a conformational change which results in the dissociation of the pseudo-substrate inhibitory motif from the catalytic domain. This, in turn, may facilitate the autophosphorylation of the activation loop at Thr-271, which leads to the kinase activation. In terms of biological role, calcium-dependent protein kinase which acts as a sensor and effector of intracellular Ca(2+) levels probably in part downstream of cGMP-activated PKG kinase. In the mosquito midgut, regulates the gliding motility of the ookinete which is essential for the ookinete to invade the midgut epithelium. However, another study showed that while required for ookinete invasion of the midgut epithelium, is not required for ookinete gliding motility. The sequence is that of Calcium-dependent protein kinase 3 from Plasmodium berghei (strain Anka).